Reading from the N-terminus, the 79-residue chain is Small cysteine-rich protein 2 (79 aa).

Positions 1 to 21 are cleaved as a signal peptide; sequence MRSQHVLILLLGLVCASQVLG. The propeptide occupies 22 to 35; it reads KHLTKVKAKALHYD.

It belongs to the Cnidaria small cysteine-rich protein (SCRiP) family. delta subfamily. In terms of processing, contains 4 disulfide bonds.

The protein localises to the secreted. Its subcellular location is the nematocyst. Functionally, this recombinant protein induces severe neurotoxicity on zebrafish larvae (Danio rerio) at a concentration of 230 mg/ml, but does not show toxicity when injected in blowfly larvae (Sarcophaga falculata). All fish incubated with this protein died within 200 minutes of exposure. Has also been claimed to be implied in calcification, but this function seems improbable. The protein is Small cysteine-rich protein 2 of Acropora millepora (Staghorn coral).